Consider the following 517-residue polypeptide: Crotonobetaine/carnitine--CoA ligase (517 aa).

It belongs to the ATP-dependent AMP-binding enzyme family.

It catalyses the reaction 4-(trimethylamino)butanoate + ATP + CoA = 4-(trimethylamino)butanoyl-CoA + AMP + diphosphate. The enzyme catalyses crotonobetaine + ATP + CoA = crotonobetainyl-CoA + AMP + diphosphate. It carries out the reaction (R)-carnitine + ATP + CoA = (R)-carnitinyl-CoA + AMP + diphosphate. Its pathway is amine and polyamine metabolism; carnitine metabolism. Functionally, catalyzes the transfer of CoA to carnitine, generating the initial carnitinyl-CoA needed for the CaiB reaction cycle. Also has activity toward crotonobetaine and gamma-butyrobetaine. The protein is Crotonobetaine/carnitine--CoA ligase of Shigella dysenteriae serotype 1 (strain Sd197).